The primary structure comprises 579 residues: Extracellular serine/threonine protein kinase FAM20C (579 aa).

Residues 1-10 lie on the Cytoplasmic side of the membrane; that stretch reads MKMILVRRFR. A propeptide spanning residues 1–87 is cleaved from the precursor; that stretch reads MKMILVRRFR…PNKHTLRILQ (87 aa). A helical; Signal-anchor for type II membrane protein membrane pass occupies residues 11–31; that stretch reads VLILVVFLLACALHIAVDLLP. The Lumenal segment spans residues 32-579; the sequence is KLDRRATRSS…ATEHRASTER (548 aa). A disordered region spans residues 38–79; the sequence is TRSSGEPGCSCAQPAAEAAGPGWAQARSRPGESAGGDAGWPN. Over residues 49 to 63 the composition is skewed to low complexity; it reads AQPAAEAAGPGWAQA. A glycan (N-linked (GlcNAc...) asparagine) is linked at Asn-96. The tract at residues 104–155 is disordered; the sequence is KLPSAAEPVDHAPRGQEPRSPPPRDPAHRPLLRDPGPRPRVPPPGPSGDGSL. 2 stretches are compositionally biased toward basic and acidic residues: residues 111–120 and 128–140; these read PVDHAPRGQE and DPAH…DPGP. Residues Gln-264, Lys-280, and Glu-301 each coordinate ATP. Glu-301 lines the Mn(2+) pocket. Residues 349–560 form a kinase domain region; sequence FVSPANNICF…AVRDCVEKDG (212 aa). Disulfide bonds link Cys-357/Cys-373 and Cys-362/Cys-366. 384-387 contributes to the ATP binding site; that stretch reads AAFL. Cystine bridges form between Cys-421–Cys-495 and Cys-496–Cys-555. Asp-453 is a catalytic residue. 2 residues coordinate ATP: Glu-458 and Asp-473. Asp-473 serves as a coordination point for Mn(2+).

Belongs to the FAM20 family. As to quaternary structure, homodimer; disulfide-linked. Interacts with FAM20A; probably forming a heterotetramer of 2 subunits of FAM20A and 2 subunits of FAM20C. Interacts with COPII components SEC23A and SEC24A; transport of FAM20C from the endoplasmic reticulum to the Golgi is likely to be mediated by COPII vesicles. Requires Mn(2+) as cofactor. In terms of processing, N-glycosylation is required for folding. Autophosphorylated. Post-translationally, propeptide cleavage by MBTPS1/S1P promotes FAM20C secretion and maximal kinase activity which is essential for efficient osteoblast differentiation and biomineralization. As to expression, in the mammary gland, expressed at higher levels in lactating mice than in virgin mice (at protein level). Highly expressed in the tooth. No expression in the dental pulp. At the secretory stage of amelogenesis, it is detected in the matrix of the enamel, in the ameloblasts, and within the cells adjoining the stratum intermedium (a tissue layer analogous to the stellate reticulum seen in the developing molar). Strong expression is observed in maturation stage ameloblasts and throughout the non-cornified layers of the gingival epithelium. Expressed at moderate levels in bone and at low levels in kidney, liver, brain and lung. Very low expression, if any, in spleen and skeletal muscle.

The protein resides in the golgi apparatus membrane. Its subcellular location is the secreted. The protein localises to the endoplasmic reticulum. It carries out the reaction L-seryl-[protein] + ATP = O-phospho-L-seryl-[protein] + ADP + H(+). The catalysed reaction is L-threonyl-[protein] + ATP = O-phospho-L-threonyl-[protein] + ADP + H(+). Its activity is regulated as follows. Serine/threonine protein kinase activity is increased upon interaction with FAM20A. Functionally, golgi serine/threonine protein kinase that phosphorylates secretory pathway proteins within Ser-x-Glu/pSer motifs and plays a key role in biomineralization of bones and teeth. Constitutes the main protein kinase for extracellular proteins, generating the majority of the extracellular phosphoproteome. Mainly phosphorylates proteins within the Ser-x-Glu/pSer motif, but also displays a broader substrate specificity. Phosphorylates ERO1A, enhancing its activity which is required to maintain endoplasmic reticulum redox homeostasis and for oxidative protein folding. During endoplasmic reticulum stress, phosphorylates P4HB/PDIA1 which induces a functional switch, causing P4HB to change from an oxidoreductase to a molecular chaperone. This is critical to maintain ER proteostasis and reduce cell death under ER stress. Phosphorylation of P4HB also promotes its interaction with ERN1, leading to reduced activity of ERN1, a key sensor for the endoplasmic reticulum unfolded protein response. Required for osteoblast differentiation and mineralization. Phosphorylates casein as well as a number of proteins involved in biomineralization such as AMELX, AMTN, ENAM and SPP1. In addition to its role in biomineralization, also plays a role in lipid homeostasis, wound healing and cell migration and adhesion. The protein is Extracellular serine/threonine protein kinase FAM20C of Mus musculus (Mouse).